Consider the following 254-residue polypeptide: Probable protein S-acyltransferase 15 (254 aa).

The next 2 membrane-spanning stretches (helical) occupy residues 1–21 (MGFV…GLQS) and 28–48 (ALLF…CVLV). The 51-residue stretch at 75–125 (RKCDKCFAYKPLRTHHCRVCRRCVLKMDHHCLWINNCVGYANYKAFFILVF) folds into the DHHC domain. Cys-105 (S-palmitoyl cysteine intermediate) is an active-site residue. 2 helical membrane-spanning segments follow: residues 119-139 (AFFI…VLLV) and 164-184 (IFMI…IYLI).

It belongs to the DHHC palmitoyltransferase family.

Its subcellular location is the endoplasmic reticulum membrane. It localises to the cytoplasmic vesicle membrane. The catalysed reaction is L-cysteinyl-[protein] + hexadecanoyl-CoA = S-hexadecanoyl-L-cysteinyl-[protein] + CoA. Palmitoyl acyltransferase. This is Probable protein S-acyltransferase 15 (PAT15) from Arabidopsis thaliana (Mouse-ear cress).